The following is a 1117-amino-acid chain: Rhoptry apical surface protein 3 (1117 aa).

Over residues 1–12 the composition is skewed to polar residues; that stretch reads MENRPRQQTSGH. 8 disordered regions span residues 1 to 27, 47 to 243, 258 to 301, 325 to 398, 415 to 442, 490 to 572, 600 to 619, and 654 to 736; these read MENR…SRPG, NHER…SHFT, DSER…NKGI, SDFK…SLST, WNHA…FLAA, AEAV…ESEL, RPLL…ELRS, and QDGT…RLQG. Basic and acidic residues-rich tracts occupy residues 83–100, 197–209, and 275–300; these read DSNH…DSQK, TPLR…RHVS, and MKPK…DNKG. 2 stretches are compositionally biased toward low complexity: residues 418–442 and 490–508; these read ASPG…FLAA and AEAV…GDSS. Basic and acidic residues predominate over residues 510–520; it reads ESDHSGRERSR. Polar residues predominate over residues 530-540; the sequence is NEITTMRSQRS. A compositionally biased stretch (basic and acidic residues) spans 546-555; the sequence is FSREPERESD. Polar residues predominate over residues 557–569; that stretch reads GEMTPTGETSGSE. The segment covering 724–734 has biased composition (basic and acidic residues); the sequence is DADRKQEEKRL. The region spanning 752–788 is the BSD domain; the sequence is MLSVDRRLRKLHSDTAVRRMGETEFWKLYFYQVFLLM. Over residues 829-838 the composition is skewed to polar residues; the sequence is QTSGFTESDT. 5 disordered regions span residues 829-848, 858-891, 909-964, 1031-1066, and 1095-1117; these read QTSG…YGFA, IIPP…APEQ, RSPS…GDSP, SSSQ…PSHL, and GTCG…GARA. The segment covering 839-848 has biased composition (low complexity); it reads SSPSPSYGFA. A compositionally biased stretch (low complexity) spans 909 to 931; that stretch reads RSPSLSSSSSGTTSVSARGTGSS. Polar residues predominate over residues 1031–1044; sequence SSSQVNGRVSTSRG. Basic and acidic residues-rich tracts occupy residues 1046–1062 and 1108–1117; these read MGED…RLEG and KGKEVQGARA.

Interacts with RASP2.

The protein localises to the cytoplasmic vesicle. It is found in the secretory vesicle. Its subcellular location is the rhoptry membrane. This chain is Rhoptry apical surface protein 3, found in Toxoplasma gondii (strain ATCC 50853 / GT1).